A 148-amino-acid polypeptide reads, in one-letter code: Lipoprotein MlpA (148 aa).

The signal sequence occupies residues 1 to 17 (MKIINILFCLFLLLLNS). C18 carries N-palmitoyl cysteine lipidation. C18 carries S-diacylglycerol cysteine lipidation. Positions 26–58 (LKNNAQQTKSRGKRDLTQKEATPEKPKSKEELL) are disordered. The segment covering 38–58 (KRDLTQKEATPEKPKSKEELL) has biased composition (basic and acidic residues).

The protein belongs to the Multicopy lipoprotein (Mlp) family.

The protein resides in the cell outer membrane. Its function is as follows. An outer membrane protein that may participate in pathogenesis. Some human Lyme disease patients have antibodies against this protein. The Mlp proteins probably undergo intragenic recombination, generating new alleles. The sequence is that of Lipoprotein MlpA (mlpA) from Borreliella burgdorferi (strain ATCC 35210 / DSM 4680 / CIP 102532 / B31) (Borrelia burgdorferi).